The chain runs to 420 residues: Annetocin receptor (420 aa).

At 1-54 (MEMDDDEAILLDDIYALASTPNQTIVTSSFPQTVSPGFLARRNEALAMVEVAVQ) the chain is on the extracellular side. Residue Asn22 is glycosylated (N-linked (GlcNAc...) asparagine). A helical membrane pass occupies residues 55–75 (STILILTVVGNAAVLAMIVSL). Topologically, residues 76–83 (SRHKDLGR) are cytoplasmic. A helical membrane pass occupies residues 84-104 (MYTMIGHLSCADLFVAIFNLL). The Extracellular segment spans residues 105 to 124 (PQLLWDVTHRFRGGRVLCKL). A disulfide bridge links Cys122 with Cys201. The chain crosses the membrane as a helical span at residues 125–145 (VKYVQVVAMYASAYVLMSTAV). Over 146–166 (DRYTAICHPMRSHTWTSTTAH) the chain is Cytoplasmic. Residues 167–187 (YLVIGAWVLALVFAVPQLVIF) traverse the membrane as a helical segment. Topologically, residues 188-212 (DYVEVVPGSGVYDCVDHFRPRWTLP) are extracellular. The chain crosses the membrane as a helical span at residues 213–233 (VYITWFALAVYVIPLVVLATI). Topologically, residues 234–328 (YLRICVVVWK…KTKTVKLTLT (95 aa)) are cytoplasmic. A helical transmembrane segment spans residues 329–349 (VVISYLVCWAPFFVSHIWSAW). The Extracellular portion of the chain corresponds to 350 to 360 (DPHAPFEGTEM). Residues 361–381 (VITLLLGSLNSCINPWIYLAF) form a helical membrane-spanning segment. At 382–420 (SDQLRRKVTQCCPRSWGQRPSTLSHDSTDFRSGSRPTHS) the chain is on the cytoplasmic side. The interval 397-420 (WGQRPSTLSHDSTDFRSGSRPTHS) is disordered. The span at 399–420 (QRPSTLSHDSTDFRSGSRPTHS) shows a compositional bias: polar residues.

It belongs to the G-protein coupled receptor 1 family. Vasopressin/oxytocin receptor subfamily. Nephridia in clitellum region.

The protein resides in the cell membrane. Its function is as follows. Receptor for annetocin. Activation by annetocin may induce egg-laying behavior through calcium-dependent signaling. The sequence is that of Annetocin receptor from Eisenia fetida (Red wiggler worm).